The chain runs to 447 residues: Argininosuccinate synthase (447 aa).

Residues 17–25 and Ala-43 contribute to the ATP site; that span reads AFSGGLDTS. Tyr-99 contacts L-citrulline. ATP-binding residues include Gly-129 and Thr-131. L-aspartate-binding residues include Thr-131, Asn-135, and Asp-136. Asn-135 contributes to the L-citrulline binding site. ATP is bound at residue Asp-136. Positions 139 and 192 each coordinate L-citrulline. Asp-194 is an ATP binding site. The L-citrulline site is built by Thr-201, Glu-203, and Glu-280.

The protein belongs to the argininosuccinate synthase family. Type 2 subfamily. As to quaternary structure, homotetramer.

The protein localises to the cytoplasm. It carries out the reaction L-citrulline + L-aspartate + ATP = 2-(N(omega)-L-arginino)succinate + AMP + diphosphate + H(+). Its pathway is amino-acid biosynthesis; L-arginine biosynthesis; L-arginine from L-ornithine and carbamoyl phosphate: step 2/3. The polypeptide is Argininosuccinate synthase (Escherichia coli O1:K1 / APEC).